A 203-amino-acid chain; its full sequence is Ras-related protein Rab-13 (203 aa).

The GTP site is built by Ser17, Gly18, Gly20, Lys21, Thr22, Cys23, and Thr40. Thr22 contributes to the Mg(2+) binding site. The short motif at 31-45 is the Switch 1 element; that stretch reads DNFNSTYISTIGIDF. Residue Thr40 participates in Mg(2+) binding. Residues Lys46 and Lys58 each participate in a glycyl lysine isopeptide (Lys-Gly) (interchain with G-Cter in ubiquitin) cross-link. Asp63 is a Mg(2+) binding site. Residues 63-80 carry the Switch 2 motif; that stretch reads DTAGQERFKTITTAYYRG. The GTP site is built by Gly66, Asn121, Lys122, Asp124, Ala152, and Lys153. Residues 173–203 are disordered; sequence TGGRRSGNSSKPSSTDLKVSDKKNSNKCSLG. Ser178 carries the post-translational modification Phosphoserine. A compositionally biased stretch (polar residues) spans 178-189; it reads SGNSSKPSSTDL. Cys200 bears the Cysteine methyl ester mark. Cys200 carries S-geranylgeranyl cysteine lipidation. A propeptide spans 201 to 203 (removed in mature form); that stretch reads SLG.

The protein belongs to the small GTPase superfamily. Rab family. As to quaternary structure, interacts (GTP-bound form) with MICALL2; competes with RAB8A and is involved in tight junctions assembly. Interacts (GTP-bound form) with MICALL1. Interacts (GTP-bound form) with MICAL1, MICAL3, MICALCL, EHBP1 and EHBP1L1; ternary complexes of RAB8A, RAB13 and either MICAL1 or EHBP1L1 are possible. Interacts with PRKACA; downstream effector of RAB13 involved in tight junction assembly. Interacts with GRB2; may recruit RAB13 to the leading edge of migrating endothelial cells where it can activate RHOA. Interacts (isoprenylated form) with PDE6D; dissociates RAB13 from membranes. Interacts with BICDL2/BICDR2. Interacts with LEPROT and LEPROTL1. It depends on Mg(2+) as a cofactor. Post-translationally, ubiquitinated via 'Lys-11'-linked ubiquitination on Lys-46 and Lys-58; impairing the recruitment of guanosine diphosphate (GDP) dissociation inhibitor 1/GDI1. In terms of tissue distribution, highest levels found in lung, kidney, whole brain and spinal cord. Expressed in all tissues tested including Sertoli and germ cells (at protein level). Also detected in osteoclasts.

Its subcellular location is the cell membrane. The protein localises to the cytoplasmic vesicle membrane. The protein resides in the cell junction. It localises to the tight junction. It is found in the golgi apparatus. Its subcellular location is the trans-Golgi network membrane. The protein localises to the recycling endosome membrane. The protein resides in the cell projection. It localises to the lamellipodium. The enzyme catalyses GTP + H2O = GDP + phosphate + H(+). With respect to regulation, regulated by guanine nucleotide exchange factors (GEFs) including DENND1C, which promote the exchange of bound GDP for free GTP. Regulated by GTPase activating proteins (GAPs) which increase the GTP hydrolysis activity. Inhibited by GDP dissociation inhibitors (GDIs). Activated in response to insulin. Its function is as follows. The small GTPases Rab are key regulators of intracellular membrane trafficking, from the formation of transport vesicles to their fusion with membranes. Rabs cycle between an inactive GDP-bound form and an active GTP-bound form that is able to recruit to membranes different sets of downstream effectors directly responsible for vesicle formation, movement, tethering and fusion. RAB13 is involved in endocytic recycling and regulates the transport to the plasma membrane of transmembrane proteins like the tight junction protein OCLN/occludin. Thereby, it regulates the assembly and the activity of tight junctions. Moreover, it may also regulate tight junction assembly by activating the PKA signaling pathway and by reorganizing the actin cytoskeleton through the activation of the downstream effectors PRKACA and MICALL2 respectively. Through its role in tight junction assembly, may play a role in the establishment of Sertoli cell barrier. Plays also a role in angiogenesis through regulation of endothelial cells chemotaxis. Also involved in neurite outgrowth. Has also been proposed to play a role in post-Golgi membrane trafficking from the TGN to the recycling endosome. Finally, it has been involved in insulin-induced transport to the plasma membrane of the glucose transporter GLUT4 and therefore may play a role in glucose homeostasis. The protein is Ras-related protein Rab-13 of Rattus norvegicus (Rat).